A 166-amino-acid chain; its full sequence is Small ribosomal subunit protein uS5 (166 aa).

An S5 DRBM domain is found at 11-74; the sequence is LQEKLIAVNR…EQAKRNLSKV (64 aa).

Belongs to the universal ribosomal protein uS5 family. Part of the 30S ribosomal subunit. Contacts proteins S4 and S8.

Its function is as follows. With S4 and S12 plays an important role in translational accuracy. Functionally, located at the back of the 30S subunit body where it stabilizes the conformation of the head with respect to the body. The protein is Small ribosomal subunit protein uS5 of Aeromonas salmonicida (strain A449).